A 135-amino-acid chain; its full sequence is MAKTLGLHILADLYGVDADKIDRVEDIRELLEGAVKYANLTKISSHYYQFQPHGATGVVLLAESHISIHTWPEHGLATVDVYTCGDPSKAYRAMDYIITQLNPKRIDKQVHERGIVEEESNQSEAEKLRSILLQV.

Ser-64 functions as the Schiff-base intermediate with substrate; via pyruvic acid in the catalytic mechanism. Ser-64 is modified (pyruvic acid (Ser); by autocatalysis). His-69 (proton acceptor; for processing activity) is an active-site residue. Residue Cys-84 is the Proton donor; for catalytic activity of the active site.

Belongs to the prokaryotic AdoMetDC family. Type 1 subfamily. Heterotetramer of two alpha and two beta chains arranged as a dimer of alpha/beta heterodimers. The cofactor is pyruvate. In terms of processing, is synthesized initially as an inactive proenzyme. Formation of the active enzyme involves a self-maturation process in which the active site pyruvoyl group is generated from an internal serine residue via an autocatalytic post-translational modification. Two non-identical subunits are generated from the proenzyme in this reaction, and the pyruvate is formed at the N-terminus of the alpha chain, which is derived from the carboxyl end of the proenzyme. The post-translation cleavage follows an unusual pathway, termed non-hydrolytic serinolysis, in which the side chain hydroxyl group of the serine supplies its oxygen atom to form the C-terminus of the beta chain, while the remainder of the serine residue undergoes an oxidative deamination to produce ammonia and the pyruvoyl group blocking the N-terminus of the alpha chain.

It carries out the reaction S-adenosyl-L-methionine + H(+) = S-adenosyl 3-(methylsulfanyl)propylamine + CO2. Its pathway is amine and polyamine biosynthesis; S-adenosylmethioninamine biosynthesis; S-adenosylmethioninamine from S-adenosyl-L-methionine: step 1/1. In terms of biological role, catalyzes the decarboxylation of S-adenosylmethionine to S-adenosylmethioninamine (dcAdoMet), the propylamine donor required for the synthesis of the polyamines spermine and spermidine from the diamine putrescine. The sequence is that of S-adenosylmethionine decarboxylase proenzyme from Aquifex aeolicus (strain VF5).